A 159-amino-acid chain; its full sequence is Putative pre-16S rRNA nuclease (159 aa).

This sequence belongs to the YqgF nuclease family.

The protein localises to the cytoplasm. Could be a nuclease involved in processing of the 5'-end of pre-16S rRNA. This Bartonella quintana (strain Toulouse) (Rochalimaea quintana) protein is Putative pre-16S rRNA nuclease.